We begin with the raw amino-acid sequence, 78 residues long: Delta-conotoxin-like S6.8 (78 aa).

The first 22 residues, 1 to 22 (MKLTCMMIVAVLFLTAWTFVTA), serve as a signal peptide directing secretion. Residues 23-53 (DDSRNGLKNLFPKARHEMKNPDASKLNKRDG) constitute a propeptide that is removed on maturation. 3 cysteine pairs are disulfide-bonded: Cys54–Cys69, Cys61–Cys73, and Cys68–Cys77.

Belongs to the conotoxin O1 superfamily. Expressed by the venom duct.

The protein resides in the secreted. Functionally, delta-conotoxins bind to site 6 of voltage-gated sodium channels (Nav) and inhibit the inactivation process. The chain is Delta-conotoxin-like S6.8 from Conus striatus (Striated cone).